The following is a 245-amino-acid chain: Thiopurine S-methyltransferase (245 aa).

Residue Ser14 is modified to Phosphoserine. 29-40 is an S-adenosyl-L-methionine binding site; sequence WQDKWVNGKTAF. Phe40 is a substrate binding site. Lys58 carries the N6-acetyllysine modification. S-adenosyl-L-methionine-binding positions include Leu69, Glu90, 134–135, and Arg152; that span reads SI.

Belongs to the class I-like SAM-binding methyltransferase superfamily. TPMT family. In terms of assembly, monomer.

The protein localises to the cytoplasm. It carries out the reaction S-adenosyl-L-methionine + a thiopurine = S-adenosyl-L-homocysteine + a thiopurine S-methylether.. The polypeptide is Thiopurine S-methyltransferase (TPMT) (Gorilla gorilla gorilla (Western lowland gorilla)).